The following is a 317-amino-acid chain: MRSYKLIAPAKINLYLEIIGDRPDGYHELVMILQSIDLADEIEIHSLSSETIHVHCNHPQVPTDKSNLVYRAAELMVTRFPEAFTKHGGVDITVHKHIPVAAGLAGGSTNAAAVLVGIDLLWNLGLTQTELEELGSTLGSDVPFCVAGGTVIATGRGEQLSPLPSLDHIYIVLGKYRSLEVSTAWAYKNYRQEYGSTYLRDTNDLASRAAAVHSGSIVKAIVEKDAVAIAQRLHNDLEKVVLPSYPQVLHLRELLASQPGVIGTMMSGSGPSVFALCETQAQAEQVQQQVRQTIPDEDLELFVTRTITHGIQVVGNG.

Lys-11 is an active-site residue. 99-109 serves as a coordination point for ATP; it reads PVAAGLAGGST. Residue Asp-141 is part of the active site.

This sequence belongs to the GHMP kinase family. IspE subfamily.

The enzyme catalyses 4-CDP-2-C-methyl-D-erythritol + ATP = 4-CDP-2-C-methyl-D-erythritol 2-phosphate + ADP + H(+). The protein operates within isoprenoid biosynthesis; isopentenyl diphosphate biosynthesis via DXP pathway; isopentenyl diphosphate from 1-deoxy-D-xylulose 5-phosphate: step 3/6. In terms of biological role, catalyzes the phosphorylation of the position 2 hydroxy group of 4-diphosphocytidyl-2C-methyl-D-erythritol. The protein is 4-diphosphocytidyl-2-C-methyl-D-erythritol kinase of Nostoc sp. (strain PCC 7120 / SAG 25.82 / UTEX 2576).